Consider the following 397-residue polypeptide: MSVGRRRIKLLGILMMANVFIYFIMEVSKSSSQEKNGKGEVIIPKEKFWKISTPPEAYWNREQEKLNRQYNPILSMLTNQTGEAGRLSNISHLNYCEPDLRVTSVVTGFNNLPDRFKDFLLYLRCRNYSLLIDQPDKCAKKPFLLLAIKSLTPHFARRQAIRESWGQESNAGNQTVVRVFLLGQTPPEDNHPDLSDMLKFESEKHQDILMWNYRDTFFNLSLKEVLFLRWVSTSCPDTEFVFKGDDDVFVNTHHILNYLNSLSKTKAKDLFIGDVIHNAGPHRDKKLKYYIPEVVYSGLYPPYAGGGGFLYSGHLALRLYHITDQVHLYPIDDVYTGMCLQKLGLVPEKHKGFRTFDIEEKNKNNICSYVDLMLVHSRKPQEMIDIWSQLQSAHLKC.

At 1-7 (MSVGRRR) the chain is on the cytoplasmic side. Residues 8-28 (IKLLGILMMANVFIYFIMEVS) traverse the membrane as a helical; Signal-anchor for type II membrane protein segment. Residues 29 to 397 (KSSSQEKNGK…SQLQSAHLKC (369 aa)) are Lumenal-facing. 5 N-linked (GlcNAc...) asparagine glycosylation sites follow: Asn-79, Asn-89, Asn-127, Asn-173, and Asn-219.

This sequence belongs to the glycosyltransferase 31 family. As to quaternary structure, interacts with B3GNT8; this interaction greatly increases B3GNT2 catalytic activity, independently of B3GNT8 enzymatic activity. It depends on Mn(2+) as a cofactor. As to expression, ubiquitous.

The protein resides in the golgi apparatus membrane. It carries out the reaction a beta-D-galactosyl-(1-&gt;4)-N-acetyl-beta-D-glucosaminyl derivative + UDP-N-acetyl-alpha-D-glucosamine = an N-acetyl-beta-D-glucosaminyl-(1-&gt;3)-beta-D-galactosyl-(1-&gt;4)-N-acetyl-beta-D-glucosaminyl derivative + UDP + H(+). Its pathway is protein modification; protein glycosylation. Beta-1,3-N-acetylglucosaminyltransferase involved in the synthesis of poly-N-acetyllactosamine. Catalyzes the initiation and elongation of poly-N-acetyllactosamine chains. Shows a marked preference for Gal(beta1-4)Glc(NAc)-based acceptors. Probably constitutes the main polylactosamine synthase. In Homo sapiens (Human), this protein is N-acetyllactosaminide beta-1,3-N-acetylglucosaminyltransferase 2 (B3GNT2).